We begin with the raw amino-acid sequence, 231 residues long: Orotidine 5'-phosphate decarboxylase (231 aa).

Residues Asp-11, Lys-34, 61–70 (DLKLHDIPNT), Thr-117, Arg-179, Gln-188, Gly-208, and Arg-209 each bind substrate. Lys-63 serves as the catalytic Proton donor.

The protein belongs to the OMP decarboxylase family. Type 1 subfamily. Homodimer.

It carries out the reaction orotidine 5'-phosphate + H(+) = UMP + CO2. It participates in pyrimidine metabolism; UMP biosynthesis via de novo pathway; UMP from orotate: step 2/2. Its function is as follows. Catalyzes the decarboxylation of orotidine 5'-monophosphate (OMP) to uridine 5'-monophosphate (UMP). The sequence is that of Orotidine 5'-phosphate decarboxylase from Streptococcus thermophilus (strain CNRZ 1066).